A 160-amino-acid chain; its full sequence is Surface-adhesin protein E (160 aa).

The N-terminal stretch at 1 to 15 (MKKIILTLSLGLLTA) is a signal peptide. Cys16 carries the N-palmitoyl cysteine lipid modification. Cys16 carries the S-diacylglycerol cysteine lipid modification. Residues 41-68 (IRLVKNVNYYIDSESIWVDNQEPQIVHF) form an interaction with laminin and plasminogen region. An interaction with vitronectin and epithelial cells region spans residues 84–108 (PKRYARSVRQYKILNCANYHLTQVR).

In terms of assembly, homodimer. Interacts with host vitronectin, laminin and plasminogen. Can interact with both immobilized and soluble vitronectin.

The protein resides in the cell outer membrane. It localises to the cell surface. Its function is as follows. Acts as a multifunctional adhesin involved in direct interactions with host epithelial cells and host proteins, including vitronectin, laminin and plasminogen. In addition, interaction with serum vitronectin plays an important role in bacterial serum resistance, and conversion of plasminogen to plasmin at the cell surface aids in immune evasion and contributes to bacterial virulence. Induces a pro-inflammatory epithelial cell response, leading to interleukin-8 (IL-8) secretion and up-regulation of ICAM1. This Haemophilus influenzae (strain NTHi 3655) protein is Surface-adhesin protein E (pe).